A 147-amino-acid chain; its full sequence is Nucleoside diphosphate kinase (147 aa).

Positions 9, 85, 91, 102, and 112 each coordinate ATP. His-115 functions as the Pros-phosphohistidine intermediate in the catalytic mechanism.

Belongs to the NDK family. Requires Mg(2+) as cofactor.

The catalysed reaction is a 2'-deoxyribonucleoside 5'-diphosphate + ATP = a 2'-deoxyribonucleoside 5'-triphosphate + ADP. It carries out the reaction a ribonucleoside 5'-diphosphate + ATP = a ribonucleoside 5'-triphosphate + ADP. Major role in the synthesis of nucleoside triphosphates other than ATP. The ATP gamma phosphate is transferred to the NDP beta phosphate via a ping-pong mechanism, using a phosphorylated active-site intermediate. This chain is Nucleoside diphosphate kinase (NDK1), found in Encephalitozoon cuniculi (strain GB-M1) (Microsporidian parasite).